Here is a 381-residue protein sequence, read N- to C-terminus: MSLNMFWFLPTHGDGHYLGTEEGSRPVDHGYLQQIAQAADRLGYTGVLIPTGRSCEDAWLVAASMIPVTQRLKFLVALRPSVTSPTVAARQAATLDRLSNGRALFNLVTGSDPQELAGDGVFLDHSERYEASAEFTQVWRRLLLGETVDFNGKHIHVRGAKLLFPPIQQPYPPLYFGGSSDVAQELAAEQVDLYLTWGEPPELVKEKIEQVRAKAAAHGRKIRFGVRLHVIVRETNDEAWQAAERLISHLDDETIAKAQAAFARTDSVGQQRMAALHNGKRDNLEISPNLWAGVGLVRGGAGTALVGDGPTVAARINEYAALGIDSFVLSGYPHLEEAYRVGELLFPHLDVAIPEIPQPQPLNPQGEAVANDFIPRNVAQS.

This sequence belongs to the SsuD family. In terms of assembly, homotetramer.

The catalysed reaction is an alkanesulfonate + FMNH2 + O2 = an aldehyde + FMN + sulfite + H2O + 2 H(+). Its function is as follows. Catalyzes the desulfonation of aliphatic sulfonates. The chain is Alkanesulfonate monooxygenase from Escherichia coli O81 (strain ED1a).